Here is a 624-residue protein sequence, read N- to C-terminus: Ubiquitin-associated and SH3 domain-containing protein A (624 aa).

Positions 19-60 constitute a UBA domain; sequence RSTPSLLDPLLAMGFPTHTALKALAATGRKTAEAAADWLHGH. Positions 238–303 constitute an SH3 domain; it reads VHYQTLKALF…PENYTERANE (66 aa). A phosphatase-like region spans residues 358-624; that stretch reads RRGILVVRHG…FNWRNWISSN (267 aa).

In terms of assembly, homodimer or homooligomer. Interacts with CBL. Part of a complex containing CBL and activated EGFR. Interacts with ubiquitin and with mono-ubiquitinated proteins. Interacts with dynamin.

It localises to the cytoplasm. It is found in the nucleus. In terms of biological role, interferes with CBL-mediated down-regulation and degradation of receptor-type tyrosine kinases. Promotes accumulation of activated target receptors, such as T-cell receptors, EGFR and PDGFRB, on the cell surface. May inhibit dynamin-dependent endocytic pathways by functionally sequestering dynamin via its SH3 domain. Exhibits negligible protein tyrosine phosphatase activity at neutral pH. May act as a dominant-negative regulator of UBASH3B-dependent dephosphorylation. The chain is Ubiquitin-associated and SH3 domain-containing protein A (Ubash3a) from Mus musculus (Mouse).